We begin with the raw amino-acid sequence, 144 residues long: Ninjurin-2 (144 aa).

Topologically, residues 1 to 62 are extracellular; that stretch reads MESDREIIHL…KSVLEQGPFS (62 aa). The helix alpha1 stretch occupies residues 27 to 39; the sequence is NHYATKKSVAESM. The helix alpha2 stretch occupies residues 40 to 59; the sequence is LDVALFMSNAMRLKSVLEQG. A helical transmembrane segment spans residues 63 to 94; sequence QYYTTLLTLISASLLLQVVIGILLVVIARLNL. Residues 95 to 98 lie on the Cytoplasmic side of the membrane; that stretch reads NEVE. The chain crosses the membrane as a helical span at residues 99–128; sequence NQWRLNQLNNAATTLVFITVVINIFITAFG. Q105 is a binding site for cholesterol. Topologically, residues 129-144 are extracellular; that stretch reads AHKTGSVAARTSSNPI.

It belongs to the ninjurin family. As to quaternary structure, homooligomer; in response to stimuli, homooligomerizes into filaments. In contrast to NINJ1, the filament is curved toward the intracellular space, preventing its circularization on a relatively flat membrane to mediate plasma membrane rupture: curvature is caused by cholesterol-binding at the cytoplasmic leaflet.

It is found in the cell membrane. Its role in unclear. In contrast to NINJ1 paralog, does not mediate plasma membrane rupture (cytolysis) downstream of necroptotic and pyroptotic programmed cell death. While it is able to oligomerize and form filaments, filaments are curved toward the intracellular space, preventing circularization to mediate plasma membrane rupture. May act as a homophilic transmembrane adhesion molecule involved in nerve regeneration. Promotes axonal growth. This Rattus norvegicus (Rat) protein is Ninjurin-2 (Ninj2).